The chain runs to 329 residues: MDSATRNPNYSPEVDPQPLPSTNPIHSRPIFSFPKRPALRITTEFDSESTVFFHKISCKFLDSLAKLKFAFHNNSKGEIAEPQISFVSKYLSLHYDLEDHSALVKSSVDVGPKLKLIGTHDVKAQQGEVTMVANLDDPGYALQLSTPLPSIALPKATFKFPQGEISLQEINDHDEDEQVKNSLSVSGTLKGQLLKGLCTAQYKDQEFKLRYRYKDDEMSFLPILSLPSNALSFAFKRRFGPSDKLSYWYNCDSNYWSAVYKHTYGEDFKFKAGYDSEVRLGWASLWVGDEGGKAKTAPMKMKVQFMLQVPQDDIKSSVLMFRVKKRWDI.

Over residues 1-10 (MDSATRNPNY) the composition is skewed to polar residues. Residues 1 to 29 (MDSATRNPNYSPEVDPQPLPSTNPIHSRP) form a disordered region. The N-terminal 57 residues, 1–57 (MDSATRNPNYSPEVDPQPLPSTNPIHSRPIFSFPKRPALRITTEFDSESTVFFHKIS), are a transit peptide targeting the chloroplast. Residues 58–60 (CKF) lie on the Cytoplasmic side of the membrane. A beta stranded membrane pass occupies residues 61 to 70 (LDSLAKLKFA). The Chloroplast intermembrane portion of the chain corresponds to 71-87 (FHNNSKGEIAEPQISFV). The beta stranded transmembrane segment at 88–97 (SKYLSLHYDL) threads the bilayer. Topologically, residues 98-113 (EDHSALVKSSVDVGPK) are cytoplasmic. A beta stranded membrane pass occupies residues 114–121 (LKLIGTHD). The Chloroplast intermembrane segment spans residues 122-138 (VKAQQGEVTMVANLDDP). Residues 139-148 (GYALQLSTPL) traverse the membrane as a beta stranded segment. Residues 149-154 (PSIALP) lie on the Cytoplasmic side of the membrane. Residues 155-163 (KATFKFPQG) traverse the membrane as a beta stranded segment. The Chloroplast intermembrane segment spans residues 164 to 205 (EISLQEINDHDEDEQVKNSLSVSGTLKGQLLKGLCTAQYKDQ). Residues 206–214 (EFKLRYRYK) traverse the membrane as a beta stranded segment. Topologically, residues 215-216 (DD) are cytoplasmic. Residues 217–226 (EMSFLPILSL) form a beta stranded membrane-spanning segment. P227 is a topological domain (chloroplast intermembrane). A beta stranded membrane pass occupies residues 228–236 (SNALSFAFK). Residues 237–243 (RRFGPSD) are Cytoplasmic-facing. Residues 244–253 (KLSYWYNCDS) traverse the membrane as a beta stranded segment. Over 254-255 (NY) the chain is Chloroplast intermembrane. Residues 256-265 (WSAVYKHTYG) form a beta stranded membrane-spanning segment. The Cytoplasmic portion of the chain corresponds to 266–272 (EDFKFKA). The chain crosses the membrane as a beta stranded span at residues 273 to 282 (GYDSEVRLGW). The Chloroplast intermembrane segment spans residues 283–302 (ASLWVGDEGGKAKTAPMKMK). Residues 303–312 (VQFMLQVPQD) form a beta stranded membrane-spanning segment. At 313 to 329 (DIKSSVLMFRVKKRWDI) the chain is on the cytoplasmic side.

This sequence belongs to the plastid outer envelope porin OEP37 (TC 1.B.47) family. As to quaternary structure, forms an hourglass-shaped multimeric complex.

The protein localises to the plastid. It localises to the chloroplast outer membrane. Its function is as follows. Voltage-dependent peptide-sensitive high conductance rectifying cation channel with a strong affinity for TIC32 that is imported into the chloroplast. Conductance is pH-dependent decreasing with decreasing pH values. The chain is Outer envelope pore protein 37, chloroplastic (OEP37) from Pisum sativum (Garden pea).